The sequence spans 675 residues: Metal-nicotianamine transporter YSL3 (675 aa).

The next 14 membrane-spanning stretches (helical) occupy residues 42–62 (ITFRGIVASLIIGIIYSVIVM), 66–86 (LTTGLVPNLNVSAALLAFVFL), 114–134 (CAVACYSIAVGGGFGSYLLGL), 159–179 (GIGWMTAFLFFTCFVGLLALV), 219–239 (VFGFVKYFSFSFIWAFFQWFF), 280–300 (IVNISLLFGAVLSWGIMWPLI), 325–345 (VFISISLILGDGLYQFIKILF), 386–406 (IPLWVAAVGYAAFSVVSIIAI), 408–428 (IMFPELKWYFIVVAYMLAPSL), 450–470 (VALFILAAMAGKQNGVVAGLV), 504–524 (VSQAIGTAIGCVVAPLTFFLF), 556–576 (FSALPQHCLQLCYGFFAFAVA), 602–622 (FLVGGYFAIDMCVGSLIVFAW), and 630–650 (AGLMVPAVASGLICGDGLWIL).

The protein belongs to the YSL (TC 2.A.67.2) family. Expressed in leaves, anthers and pollen grains. Restricted to the vasculature.

Its subcellular location is the membrane. Functionally, may be involved in the lateral transport of nicotianamine-chelated metals in the vasculature. This is Metal-nicotianamine transporter YSL3 (YSL3) from Arabidopsis thaliana (Mouse-ear cress).